We begin with the raw amino-acid sequence, 631 residues long: Phosphomethylpyrimidine synthase (631 aa).

The segment at 54-80 is disordered; sequence TLVGGDKDKPRYETNEPIPVYDTSGPY. Residues 58–67 are compositionally biased toward basic and acidic residues; that stretch reads GDKDKPRYET. Residues Asn-239, Met-268, Tyr-297, His-333, 353 to 355, 394 to 397, and Glu-433 each bind substrate; these read SRG and DGLR. His-437 is a Zn(2+) binding site. Residue Tyr-460 participates in substrate binding. A Zn(2+)-binding site is contributed by His-501. [4Fe-4S] cluster contacts are provided by Cys-581, Cys-584, and Cys-589.

It belongs to the ThiC family. As to quaternary structure, homodimer. Requires [4Fe-4S] cluster as cofactor.

It catalyses the reaction 5-amino-1-(5-phospho-beta-D-ribosyl)imidazole + S-adenosyl-L-methionine = 4-amino-2-methyl-5-(phosphooxymethyl)pyrimidine + CO + 5'-deoxyadenosine + formate + L-methionine + 3 H(+). It participates in cofactor biosynthesis; thiamine diphosphate biosynthesis. In terms of biological role, catalyzes the synthesis of the hydroxymethylpyrimidine phosphate (HMP-P) moiety of thiamine from aminoimidazole ribotide (AIR) in a radical S-adenosyl-L-methionine (SAM)-dependent reaction. The polypeptide is Phosphomethylpyrimidine synthase (Klebsiella pneumoniae subsp. pneumoniae (strain ATCC 700721 / MGH 78578)).